Here is a 250-residue protein sequence, read N- to C-terminus: MAVTKLVLVRHGESQWNNENRFTGWYDVDLSEKGVGEAKAAGKLLKEEGYSFDFAYTSVLKRAIHTLWNVLDELDQAWLPVEKSWKLNERHYGALQGLNKAETAEKYGDEQVKQWRRGFAVTPPELTKDDERYPGHDPRYAQLTEKELPLTESLALTIDRVIPYWNETILPRMKSGERIIIAAHGNSLRALVKYLDNMSEEEILELNIPTGVPLVYEFDENFKPIKHYYLGNADEIAAKAAAVANQGKAK.

Substrate is bound by residues 10–17 (RHGESQWN), 23–24 (TG), R62, 89–92 (ERHY), K100, 116–117 (RR), and 185–186 (GN). H11 serves as the catalytic Tele-phosphohistidine intermediate. Residue E89 is the Proton donor/acceptor of the active site.

It belongs to the phosphoglycerate mutase family. BPG-dependent PGAM subfamily. In terms of assembly, homodimer.

It carries out the reaction (2R)-2-phosphoglycerate = (2R)-3-phosphoglycerate. It functions in the pathway carbohydrate degradation; glycolysis; pyruvate from D-glyceraldehyde 3-phosphate: step 3/5. Functionally, catalyzes the interconversion of 2-phosphoglycerate and 3-phosphoglycerate. The sequence is that of 2,3-bisphosphoglycerate-dependent phosphoglycerate mutase from Citrobacter koseri (strain ATCC BAA-895 / CDC 4225-83 / SGSC4696).